Here is a 338-residue protein sequence, read N- to C-terminus: MIGMGIETSCDETSIGIIRDGKELLSLGIFSQIDLHKPYGGIVPEIASRAHLEKINLLLEETMEEAKIRFEDLSYVAVTSSPGLTGSLMVGAQMARCINMVYETPILPVCHLQSHFAVLHLEGVPTEFPVLGLLLSGGNSAVYILQEFGRMELVGDTMDDALGEAFDKVAGLLDLPYPGGPHIEAKANEYIPTPDEKPILPLLLRNLPQGEVSFSFSGLKTAVMVLLEKQKEVSKEQICWNFQNSAFDLVERNLKRAVAKTGIRKVFAAGGVLANTTLQKRLEVWAGKNSVELFTPKKKIYCTDNGAMVASLGYHLFRKGYKKGVDFTVNPSRQEIFS.

The Fe cation site is built by H111 and H115. Substrate is bound by residues L134 to G138, D167, G180, and N275. D304 serves as a coordination point for Fe cation.

The protein belongs to the KAE1 / TsaD family. It depends on Fe(2+) as a cofactor.

It is found in the cytoplasm. The catalysed reaction is L-threonylcarbamoyladenylate + adenosine(37) in tRNA = N(6)-L-threonylcarbamoyladenosine(37) in tRNA + AMP + H(+). Functionally, required for the formation of a threonylcarbamoyl group on adenosine at position 37 (t(6)A37) in tRNAs that read codons beginning with adenine. Is involved in the transfer of the threonylcarbamoyl moiety of threonylcarbamoyl-AMP (TC-AMP) to the N6 group of A37, together with TsaE and TsaB. TsaD likely plays a direct catalytic role in this reaction. The polypeptide is tRNA N6-adenosine threonylcarbamoyltransferase (Leptospira borgpetersenii serovar Hardjo-bovis (strain JB197)).